The chain runs to 171 residues: Putative metal-dependent hydrolase BH0277 (171 aa).

The Zn(2+) site is built by His64, His155, and His159.

This sequence belongs to the metal hydrolase YfiT family. As to quaternary structure, homodimer. Requires Zn(2+) as cofactor.

It is found in the cytoplasm. Functionally, possible metal-dependent hydrolase. The sequence is that of Putative metal-dependent hydrolase BH0277 from Halalkalibacterium halodurans (strain ATCC BAA-125 / DSM 18197 / FERM 7344 / JCM 9153 / C-125) (Bacillus halodurans).